The following is a 209-amino-acid chain: Yop proteins translocation protein K (209 aa).

In terms of biological role, belongs to an operon involved in the translocation of Yop proteins across the bacterial membranes or in the specific control of this function. In Yersinia pseudotuberculosis serotype I (strain IP32953), this protein is Yop proteins translocation protein K (yscK).